Here is a 611-residue protein sequence, read N- to C-terminus: Chaperone protein DnaK (611 aa).

A Phosphothreonine; by autocatalysis modification is found at threonine 173. Disordered regions lie at residues 525–548 and 573–611; these read DNIS…ALEG and YQQA…EDKK. Basic and acidic residues predominate over residues 529–542; the sequence is EEDKSNAESKKDAL. Low complexity predominate over residues 574-591; sequence QQAQQAQQQAQDGAQQTQ. A compositionally biased stretch (basic and acidic residues) spans 599–611; the sequence is AEFKEVNDDEDKK.

Belongs to the heat shock protein 70 family.

In terms of biological role, acts as a chaperone. The sequence is that of Chaperone protein DnaK from Staphylococcus haemolyticus (strain JCSC1435).